A 433-amino-acid chain; its full sequence is Zuotin (433 aa).

S50 bears the Phosphoserine mark. The region spanning 98–170 (LYAAMGLSKL…RAQYDSCDFV (73 aa)) is the J domain. Over residues 292–330 (EEKKEKERRKWEREAGARAEAEAKAKAEAEAKAKAESEA) the composition is skewed to basic and acidic residues. Residues 292–357 (EEKKEKERRK…KAAKKKNKRA (66 aa)) are disordered.

In terms of assembly, RAC is a heterodimer of the Hsp70/DnaK-type chaperone SSZ1 and the Hsp40/DnaJ-type chaperone ZUO1. RAC associates with ribosomes via ZUO1.

Its subcellular location is the cytoplasm. In terms of biological role, component of the ribosome-associated complex (RAC), a heterodimeric chaperone complex involved in regulation of accurate translation termination and in folding or maintaining nascent polypeptides in a folding-competent state. RAC stimulates the ATPase activity of the ribosome-associated pool of Hsp70-type chaperones SSB1/SSB2 that bind to the nascent polypeptide chain. ZUO1 can act as a J-protein for SSB1/SSB2 only when associated with SSZ1. In Saccharomyces cerevisiae (strain ATCC 204508 / S288c) (Baker's yeast), this protein is Zuotin (ZUO1).